Consider the following 100-residue polypeptide: Small ribosomal subunit protein uS14c (100 aa).

It belongs to the universal ribosomal protein uS14 family. Part of the 30S ribosomal subunit.

The protein localises to the plastid. Its subcellular location is the chloroplast. Its function is as follows. Binds 16S rRNA, required for the assembly of 30S particles. The sequence is that of Small ribosomal subunit protein uS14c from Calycanthus floridus var. glaucus (Eastern sweetshrub).